The sequence spans 287 residues: ATP synthase gamma chain (287 aa).

The protein belongs to the ATPase gamma chain family. F-type ATPases have 2 components, CF(1) - the catalytic core - and CF(0) - the membrane proton channel. CF(1) has five subunits: alpha(3), beta(3), gamma(1), delta(1), epsilon(1). CF(0) has three main subunits: a, b and c.

The protein resides in the cell inner membrane. Functionally, produces ATP from ADP in the presence of a proton gradient across the membrane. The gamma chain is believed to be important in regulating ATPase activity and the flow of protons through the CF(0) complex. This chain is ATP synthase gamma chain, found in Proteus mirabilis (strain HI4320).